The chain runs to 344 residues: Melanocyte-stimulating hormone receptor (344 aa).

The Extracellular segment spans residues M1–E37. N29 carries an N-linked (GlcNAc...) asparagine glycan. A helical membrane pass occupies residues V38–I63. Topologically, residues A64–S72 are cytoplasmic. A helical transmembrane segment spans residues M73–L93. Residues E94–N118 lie on the Extracellular side of the membrane. A helical membrane pass occupies residues T119–V140. Residues D141 to R163 lie on the Cytoplasmic side of the membrane. A helical membrane pass occupies residues A164–Y183. Topologically, residues D184–C191 are extracellular. Residues L192–L211 form a helical membrane-spanning segment. Residues A212–A240 lie on the Cytoplasmic side of the membrane. The chain crosses the membrane as a helical span at residues A241–F266. Over C267–N279 the chain is Extracellular. Residues F280–F300 form a helical membrane-spanning segment. The Cytoplasmic segment spans residues R301 to P344. The S-palmitoyl cysteine moiety is linked to residue C315.

The protein belongs to the G-protein coupled receptor 1 family. As to quaternary structure, interacts with MGRN1, but does not undergo MGRN1-mediated ubiquitination; this interaction competes with GNAS-binding and thus inhibits agonist-induced cAMP production. Interacts with OPN3; the interaction results in a decrease in MC1R-mediated cAMP signaling and ultimately a decrease in melanin production in melanocytes.

It is found in the cell membrane. Its function is as follows. Receptor for MSH (alpha, beta and gamma) and ACTH. The activity of this receptor is mediated by G proteins which activate adenylate cyclase. Mediates melanogenesis, the production of eumelanin (black/brown) and phaeomelanin (red/yellow), via regulation of cAMP signaling in melanocytes. The polypeptide is Melanocyte-stimulating hormone receptor (MC1R) (Mico argentatus (Silvery marmoset)).